The following is a 73-amino-acid chain: Large ribosomal subunit protein bL31 (73 aa).

Positions 16, 18, 37, and 40 each coordinate Zn(2+).

This sequence belongs to the bacterial ribosomal protein bL31 family. Type A subfamily. In terms of assembly, part of the 50S ribosomal subunit. It depends on Zn(2+) as a cofactor.

Functionally, binds the 23S rRNA. This chain is Large ribosomal subunit protein bL31, found in Pseudomonas savastanoi pv. phaseolicola (strain 1448A / Race 6) (Pseudomonas syringae pv. phaseolicola (strain 1448A / Race 6)).